The chain runs to 388 residues: S-adenosylmethionine synthase (388 aa).

An ATP-binding site is contributed by H16. Residue D18 participates in Mg(2+) binding. E44 is a K(+) binding site. Positions 57 and 100 each coordinate L-methionine. Positions 100 to 110 are flexible loop; sequence QSPDIAQGVNE. ATP contacts are provided by residues 167 to 169, 233 to 234, D242, 248 to 249, and K269; these read DGK, RF, and RK. Residue D242 coordinates L-methionine. L-methionine is bound at residue K273.

It belongs to the AdoMet synthase family. In terms of assembly, homotetramer; dimer of dimers. Mg(2+) is required as a cofactor. It depends on K(+) as a cofactor.

It localises to the cytoplasm. The catalysed reaction is L-methionine + ATP + H2O = S-adenosyl-L-methionine + phosphate + diphosphate. It functions in the pathway amino-acid biosynthesis; S-adenosyl-L-methionine biosynthesis; S-adenosyl-L-methionine from L-methionine: step 1/1. Functionally, catalyzes the formation of S-adenosylmethionine (AdoMet) from methionine and ATP. The overall synthetic reaction is composed of two sequential steps, AdoMet formation and the subsequent tripolyphosphate hydrolysis which occurs prior to release of AdoMet from the enzyme. The chain is S-adenosylmethionine synthase from Desulfosudis oleivorans (strain DSM 6200 / JCM 39069 / Hxd3) (Desulfococcus oleovorans).